A 341-amino-acid polypeptide reads, in one-letter code: Glycerol-3-phosphate dehydrogenase [NAD(P)+] (341 aa).

4 residues coordinate NADPH: serine 14, phenylalanine 15, arginine 35, and lysine 108. Residues lysine 108 and glycine 136 each contribute to the sn-glycerol 3-phosphate site. Alanine 140 lines the NADPH pocket. 5 residues coordinate sn-glycerol 3-phosphate: lysine 191, aspartate 244, serine 254, arginine 255, and asparagine 256. The Proton acceptor role is filled by lysine 191. Arginine 255 contacts NADPH. Residues valine 279 and glutamate 281 each contribute to the NADPH site.

The protein belongs to the NAD-dependent glycerol-3-phosphate dehydrogenase family.

The protein localises to the cytoplasm. The catalysed reaction is sn-glycerol 3-phosphate + NAD(+) = dihydroxyacetone phosphate + NADH + H(+). The enzyme catalyses sn-glycerol 3-phosphate + NADP(+) = dihydroxyacetone phosphate + NADPH + H(+). The protein operates within membrane lipid metabolism; glycerophospholipid metabolism. Its function is as follows. Catalyzes the reduction of the glycolytic intermediate dihydroxyacetone phosphate (DHAP) to sn-glycerol 3-phosphate (G3P), the key precursor for phospholipid synthesis. This Pseudomonas putida (strain ATCC 47054 / DSM 6125 / CFBP 8728 / NCIMB 11950 / KT2440) protein is Glycerol-3-phosphate dehydrogenase [NAD(P)+].